Reading from the N-terminus, the 366-residue chain is Chorismate synthase (366 aa).

Residues Arg-48 and Arg-54 each contribute to the NADP(+) site. FMN is bound by residues 125–127 (RSS), 237–238 (NA), Gly-277, 292–296 (KPTSS), and Arg-318.

The protein belongs to the chorismate synthase family. In terms of assembly, homotetramer. FMNH2 is required as a cofactor.

The catalysed reaction is 5-O-(1-carboxyvinyl)-3-phosphoshikimate = chorismate + phosphate. It functions in the pathway metabolic intermediate biosynthesis; chorismate biosynthesis; chorismate from D-erythrose 4-phosphate and phosphoenolpyruvate: step 7/7. Functionally, catalyzes the anti-1,4-elimination of the C-3 phosphate and the C-6 proR hydrogen from 5-enolpyruvylshikimate-3-phosphate (EPSP) to yield chorismate, which is the branch point compound that serves as the starting substrate for the three terminal pathways of aromatic amino acid biosynthesis. This reaction introduces a second double bond into the aromatic ring system. In Acidovorax ebreus (strain TPSY) (Diaphorobacter sp. (strain TPSY)), this protein is Chorismate synthase.